Reading from the N-terminus, the 208-residue chain is Superoxide dismutase [Mn] (208 aa).

Mn(2+) is bound by residues H27, H81, D168, and H172.

Belongs to the iron/manganese superoxide dismutase family. As to quaternary structure, homodimer. Mn(2+) serves as cofactor.

The catalysed reaction is 2 superoxide + 2 H(+) = H2O2 + O2. Its function is as follows. Destroys superoxide anion radicals which are normally produced within the cells and which are toxic to biological systems. This Buchnera aphidicola subsp. Baizongia pistaciae (strain Bp) protein is Superoxide dismutase [Mn] (sodA).